A 779-amino-acid polypeptide reads, in one-letter code: uncharacterized protein (779 aa).

[4Fe-4S] cluster is bound by residues cysteine 72 and cysteine 75.

Belongs to the prokaryotic molybdopterin-containing oxidoreductase family. Requires [4Fe-4S] cluster as cofactor. Mo-bis(molybdopterin guanine dinucleotide) is required as a cofactor.

This is an uncharacterized protein from Mycobacterium bovis (strain ATCC BAA-935 / AF2122/97).